Reading from the N-terminus, the 172-residue chain is Crossover junction endodeoxyribonuclease RuvC (172 aa).

Residues D7, E68, and D140 contribute to the active site. Mg(2+) contacts are provided by D7, E68, and D140.

It belongs to the RuvC family. Homodimer which binds Holliday junction (HJ) DNA. The HJ becomes 2-fold symmetrical on binding to RuvC with unstacked arms; it has a different conformation from HJ DNA in complex with RuvA. In the full resolvosome a probable DNA-RuvA(4)-RuvB(12)-RuvC(2) complex forms which resolves the HJ. Mg(2+) serves as cofactor.

The protein resides in the cytoplasm. It carries out the reaction Endonucleolytic cleavage at a junction such as a reciprocal single-stranded crossover between two homologous DNA duplexes (Holliday junction).. In terms of biological role, the RuvA-RuvB-RuvC complex processes Holliday junction (HJ) DNA during genetic recombination and DNA repair. Endonuclease that resolves HJ intermediates. Cleaves cruciform DNA by making single-stranded nicks across the HJ at symmetrical positions within the homologous arms, yielding a 5'-phosphate and a 3'-hydroxyl group; requires a central core of homology in the junction. The consensus cleavage sequence is 5'-(A/T)TT(C/G)-3'. Cleavage occurs on the 3'-side of the TT dinucleotide at the point of strand exchange. HJ branch migration catalyzed by RuvA-RuvB allows RuvC to scan DNA until it finds its consensus sequence, where it cleaves and resolves the cruciform DNA. This chain is Crossover junction endodeoxyribonuclease RuvC, found in Polynucleobacter asymbioticus (strain DSM 18221 / CIP 109841 / QLW-P1DMWA-1) (Polynucleobacter necessarius subsp. asymbioticus).